A 465-amino-acid polypeptide reads, in one-letter code: Chromosomal replication initiator protein DnaA (465 aa).

The interval 1-84 (MSLSLWQQCL…RFEVGSKPLV (84 aa)) is domain I, interacts with DnaA modulators. The tract at residues 84–128 (VQAISQPAQPHHKQVSAAPQQQVRSAPVRPSWDNSPAQAEHTYRS) is domain II. Positions 91 to 120 (AQPHHKQVSAAPQQQVRSAPVRPSWDNSPA) are disordered. The interval 129–345 (NVNPKHTFDN…GALNRVIANA (217 aa)) is domain III, AAA+ region. Residues glycine 173, glycine 175, lysine 176, and threonine 177 each contribute to the ATP site. Positions 346–465 (NFTGRSITID…FSNLIRTLSS (120 aa)) are domain IV, binds dsDNA.

It belongs to the DnaA family. As to quaternary structure, oligomerizes as a right-handed, spiral filament on DNA at oriC.

It localises to the cytoplasm. Plays an essential role in the initiation and regulation of chromosomal replication. ATP-DnaA binds to the origin of replication (oriC) to initiate formation of the DNA replication initiation complex once per cell cycle. Binds the DnaA box (a 9 base pair repeat at the origin) and separates the double-stranded (ds)DNA. Forms a right-handed helical filament on oriC DNA; dsDNA binds to the exterior of the filament while single-stranded (ss)DNA is stabiized in the filament's interior. The ATP-DnaA-oriC complex binds and stabilizes one strand of the AT-rich DNA unwinding element (DUE), permitting loading of DNA polymerase. After initiation quickly degrades to an ADP-DnaA complex that is not apt for DNA replication. Binds acidic phospholipids. This Pectobacterium carotovorum subsp. carotovorum (strain PC1) protein is Chromosomal replication initiator protein DnaA.